A 156-amino-acid chain; its full sequence is MTEYLGTFNGSKLKIAIIVARFNDLVTKRLLDGAFQTLAQNGVSKEDIDIYWVPGAFEIPRVAQKISQKGNVDGIITLGAVVRGETSHYESVCSGVTSGIAQIALEGKVPVMFGVLMTENMEQALNRAGGKAGNKGSECATGLLEMIDIEQTIDRE.

5-amino-6-(D-ribitylamino)uracil-binding positions include Phe22, 56–58 (AFE), and 80–82 (AVV). A (2S)-2-hydroxy-3-oxobutyl phosphate-binding site is contributed by 85–86 (ET). His88 acts as the Proton donor in catalysis. Residue Phe113 participates in 5-amino-6-(D-ribitylamino)uracil binding. A (2S)-2-hydroxy-3-oxobutyl phosphate-binding site is contributed by Arg127.

The protein belongs to the DMRL synthase family.

It carries out the reaction (2S)-2-hydroxy-3-oxobutyl phosphate + 5-amino-6-(D-ribitylamino)uracil = 6,7-dimethyl-8-(1-D-ribityl)lumazine + phosphate + 2 H2O + H(+). Its pathway is cofactor biosynthesis; riboflavin biosynthesis; riboflavin from 2-hydroxy-3-oxobutyl phosphate and 5-amino-6-(D-ribitylamino)uracil: step 1/2. Functionally, catalyzes the formation of 6,7-dimethyl-8-ribityllumazine by condensation of 5-amino-6-(D-ribitylamino)uracil with 3,4-dihydroxy-2-butanone 4-phosphate. This is the penultimate step in the biosynthesis of riboflavin. The protein is 6,7-dimethyl-8-ribityllumazine synthase of Pediococcus pentosaceus (strain ATCC 25745 / CCUG 21536 / LMG 10740 / 183-1w).